We begin with the raw amino-acid sequence, 184 residues long: Ribosome maturation factor RimM (184 aa).

A PRC barrel domain is found at 111-184; it reads DDEFYWVDLI…HIVVDWGLDY (74 aa).

Belongs to the RimM family. Binds ribosomal protein uS19.

The protein localises to the cytoplasm. Functionally, an accessory protein needed during the final step in the assembly of 30S ribosomal subunit, possibly for assembly of the head region. Essential for efficient processing of 16S rRNA. May be needed both before and after RbfA during the maturation of 16S rRNA. It has affinity for free ribosomal 30S subunits but not for 70S ribosomes. This Ralstonia nicotianae (strain ATCC BAA-1114 / GMI1000) (Ralstonia solanacearum) protein is Ribosome maturation factor RimM.